A 737-amino-acid chain; its full sequence is Zinc finger protein 585A (737 aa).

One can recognise a KRAB domain in the interval 1–65; it reads MAAPTREEWR…QGERPRQSCP (65 aa). 6 consecutive C2H2-type zinc fingers follow at residues 126 to 148, 154 to 176, 182 to 204, 210 to 232, 238 to 260, and 266 to 288; these read YVCI…QKTH, FKCN…QRIH, YECS…EKIH, HECT…QKIH, YICI…RRIH, and YECS…QRVH. Residues 294–316 form a C2H2-type 7; degenerate zinc finger; the sequence is YICTEYGKVFSNNSNLITHKKVQ. C2H2-type zinc fingers lie at residues 322 to 344, 350 to 372, 378 to 400, 406 to 428, 434 to 456, 462 to 484, 490 to 512, 518 to 540, 546 to 568, 574 to 596, 602 to 624, 630 to 652, 658 to 680, 686 to 708, and 714 to 736; these read SICT…QRIH, YACS…QRIH, YICM…QIIH, YKCG…KRIH, YMCN…QKTH, YICS…QRIH, YECS…QKIH, YECH…QKIH, YVCT…QRIH, YECS…QPLH, YVCA…QKTH, YICS…HRIH, YECS…QRIH, YVCA…QTTH, and YKCG…QSNH.

The protein belongs to the krueppel C2H2-type zinc-finger protein family.

The protein localises to the nucleus. Functionally, may be involved in transcriptional regulation. In Pongo abelii (Sumatran orangutan), this protein is Zinc finger protein 585A (ZNF585A).